The sequence spans 156 residues: ATP synthase subunit b (156 aa).

Residues 7 to 29 (LFAQMVVFLVLAWFTMKFVWPPL) traverse the membrane as a helical segment.

Belongs to the ATPase B chain family. In terms of assembly, F-type ATPases have 2 components, F(1) - the catalytic core - and F(0) - the membrane proton channel. F(1) has five subunits: alpha(3), beta(3), gamma(1), delta(1), epsilon(1). F(0) has three main subunits: a(1), b(2) and c(10-14). The alpha and beta chains form an alternating ring which encloses part of the gamma chain. F(1) is attached to F(0) by a central stalk formed by the gamma and epsilon chains, while a peripheral stalk is formed by the delta and b chains.

It localises to the cell inner membrane. Its function is as follows. F(1)F(0) ATP synthase produces ATP from ADP in the presence of a proton or sodium gradient. F-type ATPases consist of two structural domains, F(1) containing the extramembraneous catalytic core and F(0) containing the membrane proton channel, linked together by a central stalk and a peripheral stalk. During catalysis, ATP synthesis in the catalytic domain of F(1) is coupled via a rotary mechanism of the central stalk subunits to proton translocation. Component of the F(0) channel, it forms part of the peripheral stalk, linking F(1) to F(0). In Burkholderia cenocepacia (strain ATCC BAA-245 / DSM 16553 / LMG 16656 / NCTC 13227 / J2315 / CF5610) (Burkholderia cepacia (strain J2315)), this protein is ATP synthase subunit b.